The sequence spans 422 residues: Probable protein phosphatase 2C 43 (422 aa).

The 277-residue stretch at 117 to 393 folds into the PPM-type phosphatase domain; sequence SSGSYADKGD…DNVTVVVICF (277 aa). Mn(2+)-binding residues include aspartate 163, glycine 164, aspartate 341, and aspartate 384.

Belongs to the PP2C family. Mg(2+) is required as a cofactor. Requires Mn(2+) as cofactor.

The enzyme catalyses O-phospho-L-seryl-[protein] + H2O = L-seryl-[protein] + phosphate. The catalysed reaction is O-phospho-L-threonyl-[protein] + H2O = L-threonyl-[protein] + phosphate. The protein is Probable protein phosphatase 2C 43 of Arabidopsis thaliana (Mouse-ear cress).